The following is a 910-amino-acid chain: Valine--tRNA ligase (910 aa).

The 'HIGH' region motif lies at 46–56 (PNVTGSLHMGH). A 'KMSKS' region motif is present at residues 539–543 (KMSKS). Lys542 contributes to the ATP binding site. Positions 845 to 909 (DLDILRNKIQ…QMLQERLKML (65 aa)) form a coiled coil.

Belongs to the class-I aminoacyl-tRNA synthetase family. ValS type 1 subfamily. Monomer.

The protein localises to the cytoplasm. The catalysed reaction is tRNA(Val) + L-valine + ATP = L-valyl-tRNA(Val) + AMP + diphosphate. Its function is as follows. Catalyzes the attachment of valine to tRNA(Val). As ValRS can inadvertently accommodate and process structurally similar amino acids such as threonine, to avoid such errors, it has a 'posttransfer' editing activity that hydrolyzes mischarged Thr-tRNA(Val) in a tRNA-dependent manner. The protein is Valine--tRNA ligase of Synechocystis sp. (strain ATCC 27184 / PCC 6803 / Kazusa).